The following is a 131-amino-acid chain: Glycine cleavage system H protein (131 aa).

Residues 24-106 (TVRVGITDYA…YGEGWLVELQ (83 aa)) form the Lipoyl-binding domain. Lys65 is subject to N6-lipoyllysine.

This sequence belongs to the GcvH family. As to quaternary structure, the glycine cleavage system is composed of four proteins: P, T, L and H. The cofactor is (R)-lipoate.

Functionally, the glycine cleavage system catalyzes the degradation of glycine. The H protein shuttles the methylamine group of glycine from the P protein to the T protein. The polypeptide is Glycine cleavage system H protein (Mycolicibacterium vanbaalenii (strain DSM 7251 / JCM 13017 / BCRC 16820 / KCTC 9966 / NRRL B-24157 / PYR-1) (Mycobacterium vanbaalenii)).